The sequence spans 447 residues: Pyruvate kinase (447 aa).

R33 serves as a coordination point for substrate. Residues N35, S37, and D61 each coordinate K(+). 35 to 38 (NMSH) is an ATP binding site. R68 is an ATP binding site. E203 serves as a coordination point for Mg(2+). Substrate-binding residues include G226, D227, and T259. D227 contributes to the Mg(2+) binding site.

This sequence belongs to the pyruvate kinase family. In terms of assembly, homotetramer. It depends on Mg(2+) as a cofactor. K(+) serves as cofactor.

The enzyme catalyses pyruvate + ATP = phosphoenolpyruvate + ADP + H(+). Its pathway is carbohydrate degradation; glycolysis; pyruvate from D-glyceraldehyde 3-phosphate: step 5/5. This chain is Pyruvate kinase, found in Methanocaldococcus jannaschii (strain ATCC 43067 / DSM 2661 / JAL-1 / JCM 10045 / NBRC 100440) (Methanococcus jannaschii).